A 173-amino-acid polypeptide reads, in one-letter code: ATP synthase subunit delta (173 aa).

Belongs to the ATPase delta chain family. F-type ATPases have 2 components, F(1) - the catalytic core - and F(0) - the membrane proton channel. F(1) has five subunits: alpha(3), beta(3), gamma(1), delta(1), epsilon(1). F(0) has three main subunits: a(1), b(2) and c(10-14). The alpha and beta chains form an alternating ring which encloses part of the gamma chain. F(1) is attached to F(0) by a central stalk formed by the gamma and epsilon chains, while a peripheral stalk is formed by the delta and b chains.

It localises to the cell inner membrane. Functionally, f(1)F(0) ATP synthase produces ATP from ADP in the presence of a proton or sodium gradient. F-type ATPases consist of two structural domains, F(1) containing the extramembraneous catalytic core and F(0) containing the membrane proton channel, linked together by a central stalk and a peripheral stalk. During catalysis, ATP synthesis in the catalytic domain of F(1) is coupled via a rotary mechanism of the central stalk subunits to proton translocation. Its function is as follows. This protein is part of the stalk that links CF(0) to CF(1). It either transmits conformational changes from CF(0) to CF(1) or is implicated in proton conduction. This is ATP synthase subunit delta from Campylobacter jejuni subsp. doylei (strain ATCC BAA-1458 / RM4099 / 269.97).